The chain runs to 551 residues: Probable malate:quinone oxidoreductase (551 aa).

Positions 525 to 544 (QTAAAAPQAQPQLKPQPDAK) are enriched in low complexity. The interval 525–551 (QTAAAAPQAQPQLKPQPDAKPVADIAL) is disordered.

Belongs to the MQO family. FAD is required as a cofactor.

The catalysed reaction is (S)-malate + a quinone = a quinol + oxaloacetate. The protein operates within carbohydrate metabolism; tricarboxylic acid cycle; oxaloacetate from (S)-malate (quinone route): step 1/1. This is Probable malate:quinone oxidoreductase from Enterobacter sp. (strain 638).